Here is a 294-residue protein sequence, read N- to C-terminus: ATP synthase gamma chain (294 aa).

This sequence belongs to the ATPase gamma chain family. In terms of assembly, F-type ATPases have 2 components, CF(1) - the catalytic core - and CF(0) - the membrane proton channel. CF(1) has five subunits: alpha(3), beta(3), gamma(1), delta(1), epsilon(1). CF(0) has three main subunits: a, b and c.

The protein resides in the cell inner membrane. Produces ATP from ADP in the presence of a proton gradient across the membrane. The gamma chain is believed to be important in regulating ATPase activity and the flow of protons through the CF(0) complex. The protein is ATP synthase gamma chain of Paraburkholderia xenovorans (strain LB400).